The primary structure comprises 99 residues: Large ribosomal subunit protein uL23 (99 aa).

Belongs to the universal ribosomal protein uL23 family. In terms of assembly, part of the 50S ribosomal subunit. Contacts protein L29, and trigger factor when it is bound to the ribosome.

In terms of biological role, one of the early assembly proteins it binds 23S rRNA. One of the proteins that surrounds the polypeptide exit tunnel on the outside of the ribosome. Forms the main docking site for trigger factor binding to the ribosome. This is Large ribosomal subunit protein uL23 from Stenotrophomonas maltophilia (strain R551-3).